The following is a 267-amino-acid chain: MLYFIGLGLSIKHLTLEAIDALRDVEKIYVDTYTNIVPDFSLDKLVSLVGEEKEFVMAKREFLEGKNIHFIVEEASKKNIAILVPGDPFIATTHDAIRVEALRRGIKVKVINGLSIYSLAPSRTGLQAYKFGKTVTLVYPEYFKPYSTIETIYDNLDRNLHTLLLLDLKIEENKAMTIPEAVDILIDLDERGVLENIIGVGLAQLGSSMEKIVADRLADLKNYTYPPPPHSIIIVAKPHPIELDNLHYVCGLPEHIYRRYSVSKTYP.

S-adenosyl-L-methionine-binding positions include leucine 9, aspartate 87, isoleucine 90, 115-116 (SI), leucine 166, leucine 205, and histidine 230.

This sequence belongs to the diphthine synthase family. Homodimer.

It catalyses the reaction 2-[(3S)-amino-3-carboxypropyl]-L-histidyl-[translation elongation factor 2] + 3 S-adenosyl-L-methionine = diphthine-[translation elongation factor 2] + 3 S-adenosyl-L-homocysteine + 3 H(+). It functions in the pathway protein modification; peptidyl-diphthamide biosynthesis. Its function is as follows. S-adenosyl-L-methionine-dependent methyltransferase that catalyzes the trimethylation of the amino group of the modified target histidine residue in translation elongation factor 2 (EF-2), to form an intermediate called diphthine. The three successive methylation reactions represent the second step of diphthamide biosynthesis. The chain is Diphthine synthase from Staphylothermus marinus (strain ATCC 43588 / DSM 3639 / JCM 9404 / F1).